The chain runs to 239 residues: Ribonuclease PH (239 aa).

Phosphate-binding positions include Arg-86 and 124-126; that span reads GTR.

The protein belongs to the RNase PH family. In terms of assembly, homohexameric ring arranged as a trimer of dimers.

The enzyme catalyses tRNA(n+1) + phosphate = tRNA(n) + a ribonucleoside 5'-diphosphate. In terms of biological role, phosphorolytic 3'-5' exoribonuclease that plays an important role in tRNA 3'-end maturation. Removes nucleotide residues following the 3'-CCA terminus of tRNAs; can also add nucleotides to the ends of RNA molecules by using nucleoside diphosphates as substrates, but this may not be physiologically important. Probably plays a role in initiation of 16S rRNA degradation (leading to ribosome degradation) during starvation. The chain is Ribonuclease PH from Marinomonas sp. (strain MWYL1).